The chain runs to 224 residues: Metalloproteinase inhibitor 4 (224 aa).

A signal peptide spans 1 to 29 (MPWSPLAALSWALVLRLLALLWPPGRGEA). Cys-30 contacts Zn(2+). Involved in metalloproteinase-binding regions lie at residues 30–33 (CSCA) and 99–100 (SS). 6 cysteine pairs are disulfide-bonded: Cys-30-Cys-102, Cys-32-Cys-131, Cys-42-Cys-156, Cys-158-Cys-205, Cys-163-Cys-168, and Cys-176-Cys-197. Residues 30 to 156 (CSCAPAHPQQ…SLNHHYHQNC (127 aa)) enclose the NTR domain.

The protein belongs to the protease inhibitor I35 (TIMP) family. Expressed in brain, heart, ovary and skeletal muscle.

The protein localises to the secreted. In terms of biological role, complexes with metalloproteinases (such as collagenases) and irreversibly inactivates them by binding to their catalytic zinc cofactor. In Mus musculus (Mouse), this protein is Metalloproteinase inhibitor 4 (Timp4).